Consider the following 251-residue polypeptide: NADH-quinone oxidoreductase subunit B (251 aa).

C38, C39, C104, and C134 together coordinate [4Fe-4S] cluster. The interval 208-251 (RKGLPPGSMTDVGWIPPEARERLKAGRGAGASGSGEREEGKEGA) is disordered. Over residues 242-251 (GEREEGKEGA) the composition is skewed to basic and acidic residues.

The protein belongs to the complex I 20 kDa subunit family. NDH-1 is composed of 14 different subunits. Subunits NuoB, C, D, E, F, and G constitute the peripheral sector of the complex. The cofactor is [4Fe-4S] cluster.

Its subcellular location is the cell membrane. It carries out the reaction a quinone + NADH + 5 H(+)(in) = a quinol + NAD(+) + 4 H(+)(out). In terms of biological role, NDH-1 shuttles electrons from NADH, via FMN and iron-sulfur (Fe-S) centers, to quinones in the respiratory chain. The immediate electron acceptor for the enzyme in this species is believed to be a menaquinone. Couples the redox reaction to proton translocation (for every two electrons transferred, four hydrogen ions are translocated across the cytoplasmic membrane), and thus conserves the redox energy in a proton gradient. This is NADH-quinone oxidoreductase subunit B from Rubrobacter xylanophilus (strain DSM 9941 / JCM 11954 / NBRC 16129 / PRD-1).